The chain runs to 274 residues: MGEFPTLLQQGNGWFFIPSAILLGILHGLEPGHSKTMMAAFIIAIKGTVKQAVMLGLAATLSHTAIVWLIALGGMYLSRAFTAQSVEPWLQLISAIIILSTACWMFWRTWRGEQQWLAGNHHHDHDHDHDHDHDHHGHIHPEGATSKAYQDAHERAHAADIQRRFDGQTVTNGQILLFGLTGGLIPCPAAITVLLICIQLKAFTLGATMVLSFSLSLALTLVTVGVGAAISVQQAAKRWSGFSTLARRAPYFSSILIGLVGVYMGIHGYTGIMQ.

The Periplasmic portion of the chain corresponds to 1–12; it reads MGEFPTLLQQGN. Residues 13 to 33 form a helical membrane-spanning segment; sequence GWFFIPSAILLGILHGLEPGH. At 34-51 the chain is on the cytoplasmic side; it reads SKTMMAAFIIAIKGTVKQ. Residues 52 to 72 traverse the membrane as a helical segment; the sequence is AVMLGLAATLSHTAIVWLIAL. Residues 73–85 are Periplasmic-facing; it reads GGMYLSRAFTAQS. Residues 86-106 form a helical membrane-spanning segment; sequence VEPWLQLISAIIILSTACWMF. Residues 107-174 lie on the Cytoplasmic side of the membrane; that stretch reads WRTWRGEQQW…FDGQTVTNGQ (68 aa). Basic and acidic residues predominate over residues 122 to 141; that stretch reads HHDHDHDHDHDHDHHGHIHP. The disordered stretch occupies residues 122–143; that stretch reads HHDHDHDHDHDHDHHGHIHPEG. A helical membrane pass occupies residues 175–195; that stretch reads ILLFGLTGGLIPCPAAITVLL. Residues 196 to 209 are Periplasmic-facing; sequence ICIQLKAFTLGATM. Residues 210 to 230 form a helical membrane-spanning segment; it reads VLSFSLSLALTLVTVGVGAAI. Over 231-251 the chain is Cytoplasmic; it reads SVQQAAKRWSGFSTLARRAPY. A helical transmembrane segment spans residues 252 to 272; it reads FSSILIGLVGVYMGIHGYTGI. Residues 273 to 274 lie on the Periplasmic side of the membrane; sequence MQ.

Belongs to the NiCoT transporter (TC 2.A.52) family. RcnA subfamily.

The protein resides in the cell inner membrane. Its function is as follows. Efflux system for nickel and cobalt. This is Nickel/cobalt efflux system RcnA (rcnA) from Salmonella paratyphi A (strain ATCC 9150 / SARB42).